We begin with the raw amino-acid sequence, 149 residues long: Transthyretin (149 aa).

A signal peptide spans 1–20 (MAFHSLLLLCLAGLLFVSEA). At Cys32 the chain carries Sulfocysteine. Residue Lys37 coordinates L-thyroxine. 4-carboxyglutamate is present on Glu64. L-thyroxine contacts are provided by Glu76 and Ser139.

It belongs to the transthyretin family. As to quaternary structure, homotetramer. Dimer of dimers. In the homotetramer, subunits assemble around a central channel that can accommodate two ligand molecules. Interacts with RBP4. Sulfonation of the reactive cysteine Cys-32 enhances the stability of the native conformation of TTR, avoiding misassembly of the protein leading to amyloid formation. In terms of tissue distribution, detected in plasma (at protein level). Detected in liver.

It is found in the secreted. Its function is as follows. Thyroid hormone-binding protein. Probably transports thyroxine from the bloodstream to the brain. The protein is Transthyretin (TTR) of Petaurus breviceps (Australian sugar glider).